A 490-amino-acid chain; its full sequence is Probable cytosol aminopeptidase (490 aa).

Lys258 and Asp263 together coordinate Mn(2+). The active site involves Lys270. Residues Asp282, Asp341, and Glu343 each coordinate Mn(2+). Residue Arg345 is part of the active site.

Belongs to the peptidase M17 family. Mn(2+) is required as a cofactor.

The protein localises to the cytoplasm. The enzyme catalyses Release of an N-terminal amino acid, Xaa-|-Yaa-, in which Xaa is preferably Leu, but may be other amino acids including Pro although not Arg or Lys, and Yaa may be Pro. Amino acid amides and methyl esters are also readily hydrolyzed, but rates on arylamides are exceedingly low.. The catalysed reaction is Release of an N-terminal amino acid, preferentially leucine, but not glutamic or aspartic acids.. In terms of biological role, presumably involved in the processing and regular turnover of intracellular proteins. Catalyzes the removal of unsubstituted N-terminal amino acids from various peptides. The chain is Probable cytosol aminopeptidase from Microcystis aeruginosa (strain NIES-843 / IAM M-2473).